We begin with the raw amino-acid sequence, 233 residues long: Leucyl/phenylalanyl-tRNA--protein transferase (233 aa).

The protein belongs to the L/F-transferase family.

The protein resides in the cytoplasm. The catalysed reaction is N-terminal L-lysyl-[protein] + L-leucyl-tRNA(Leu) = N-terminal L-leucyl-L-lysyl-[protein] + tRNA(Leu) + H(+). The enzyme catalyses N-terminal L-arginyl-[protein] + L-leucyl-tRNA(Leu) = N-terminal L-leucyl-L-arginyl-[protein] + tRNA(Leu) + H(+). It catalyses the reaction L-phenylalanyl-tRNA(Phe) + an N-terminal L-alpha-aminoacyl-[protein] = an N-terminal L-phenylalanyl-L-alpha-aminoacyl-[protein] + tRNA(Phe). Functionally, functions in the N-end rule pathway of protein degradation where it conjugates Leu, Phe and, less efficiently, Met from aminoacyl-tRNAs to the N-termini of proteins containing an N-terminal arginine or lysine. This chain is Leucyl/phenylalanyl-tRNA--protein transferase, found in Desulfatibacillum aliphaticivorans.